Here is a 439-residue protein sequence, read N- to C-terminus: MKKPLRWLAALTVLLLPLSALAQQQGLTIDIVGGSASATPIAVIPMPYQGSDTAPQTDVSAVVGADLDRSGQFRTLPAAQIVEKPTRGTEVQFQTWRTLKQNYIVVGRVMDAGEGAYRVEYELFDVAKGERMLGLAMTARANAMRDVSHQMADAIYEKITGVRGAFWTRIAYVTASGKGGAMRYALMVADSDGYNPQTIVRSAEPLLSPNWSPDGKKLAYVSFERGNSSIYLQDIATGARELVSSFRGINGAPSFSPDGRRLALALSRSGNPEIYVMDLGSKQLTQLTNHFGIDTEPTWAPDGGSIYFTSDRGGRPQIYQVAASGGSANRVTFQGNYNATASVSFDGKKIAVAQGSGNTYRIAMMDRSLGSPSWSTLSPGSLDESPSFAPNASMVLYAAREGGRGVLYAVSSDARVRQRLVLADGDVREPAWGPYRTAH.

The first 22 residues, 1–22 (MKKPLRWLAALTVLLLPLSALA), serve as a signal peptide directing secretion.

Belongs to the TolB family. In terms of assembly, the Tol-Pal system is composed of five core proteins: the inner membrane proteins TolA, TolQ and TolR, the periplasmic protein TolB and the outer membrane protein Pal. They form a network linking the inner and outer membranes and the peptidoglycan layer.

It is found in the periplasm. Part of the Tol-Pal system, which plays a role in outer membrane invagination during cell division and is important for maintaining outer membrane integrity. In Xanthomonas oryzae pv. oryzae (strain PXO99A), this protein is Tol-Pal system protein TolB.